The sequence spans 295 residues: Microcin B17-processing protein McbB (295 aa).

The protein resides in the cytoplasm. In terms of biological role, necessary to process the inactive microcin B17 (McbA) precursor into the active peptide. This is Microcin B17-processing protein McbB (mcbB) from Escherichia coli.